Reading from the N-terminus, the 192-residue chain is Secreted and transmembrane protein 1A (192 aa).

Residues 1-27 (MMTCPSVPAIPTLWLFSILLLVVSLNA) form the signal peptide. Residues 28-165 (QNKSWDNPIC…SSPIEGKPGT (138 aa)) are Extracellular-facing. Residues Asn-29, Asn-55, Asn-84, and Asn-127 are each glycosylated (N-linked (GlcNAc...) asparagine). A helical transmembrane segment spans residues 166-186 (LVGVITVIFILGVAGFITFIY). Residues 187 to 192 (YRHRRS) are Cytoplasmic-facing.

This sequence belongs to the SECTM family.

The protein localises to the cell membrane. The protein resides in the secreted. The sequence is that of Secreted and transmembrane protein 1A from Mus musculus (Mouse).